A 161-amino-acid polypeptide reads, in one-letter code: MFLMVTEFINYSEQIIRAARYIGQGLMITLSHANRLPVTIQYPYEKIISSERFRGRIHFEFDKCIACEVCVRVCPIDLPIVDWKLETDIRKKRLLNYSIDFGICIFCGNCIEYCPTNCLSMTEEYELSTYDRHELNYNLIALGRLPVSVIDDYTIRTIQIK.

2 consecutive 4Fe-4S ferredoxin-type domains span residues 55-84 (GRIHFEFDKCIACEVCVRVCPIDLPIVDWK) and 95-124 (LNYSIDFGICIFCGNCIEYCPTNCLSMTEE). Cys-64, Cys-67, Cys-70, Cys-74, Cys-104, Cys-107, Cys-110, and Cys-114 together coordinate [4Fe-4S] cluster.

The protein belongs to the complex I 23 kDa subunit family. As to quaternary structure, NDH is composed of at least 16 different subunits, 5 of which are encoded in the nucleus. Requires [4Fe-4S] cluster as cofactor.

It is found in the plastid. The protein resides in the chloroplast thylakoid membrane. It catalyses the reaction a plastoquinone + NADH + (n+1) H(+)(in) = a plastoquinol + NAD(+) + n H(+)(out). The catalysed reaction is a plastoquinone + NADPH + (n+1) H(+)(in) = a plastoquinol + NADP(+) + n H(+)(out). Its function is as follows. NDH shuttles electrons from NAD(P)H:plastoquinone, via FMN and iron-sulfur (Fe-S) centers, to quinones in the photosynthetic chain and possibly in a chloroplast respiratory chain. The immediate electron acceptor for the enzyme in this species is believed to be plastoquinone. Couples the redox reaction to proton translocation, and thus conserves the redox energy in a proton gradient. The chain is NAD(P)H-quinone oxidoreductase subunit I, chloroplastic from Phaseolus vulgaris (Kidney bean).